The following is a 1290-amino-acid chain: Vacuolating cytotoxin autotransporter (1290 aa).

An N-terminal signal peptide occupies residues 1–33; the sequence is MEIQQTHRKINRPLVSLALVGALVSITPQQSHA. Positions 326 to 374 are disordered; the sequence is PPEGGYKDKPKDKPSNTTQNNANNNQQNSAQNNSNTQVINPPNSAQKTE. Residues 330-339 are compositionally biased toward basic and acidic residues; sequence GYKDKPKDKP. A compositionally biased stretch (low complexity) spans 340 to 362; that stretch reads SNTTQNNANNNQQNSAQNNSNTQ. The span at 363-374 shows a compositional bias: polar residues; it reads VINPPNSAQKTE. Residues 1018–1290 form the Autotransporter domain; it reads KYEKPTNVWA…ASNLGMRYSF (273 aa).

It localises to the periplasm. The protein resides in the secreted. The protein localises to the cell surface. It is found in the cell outer membrane. In terms of biological role, induces vacuolation of eukaryotic cells. Causes ulceration and gastric lesions. This is Vacuolating cytotoxin autotransporter (vacA) from Helicobacter pylori (strain ATCC 700392 / 26695) (Campylobacter pylori).